A 206-amino-acid polypeptide reads, in one-letter code: Ribosomal RNA large subunit methyltransferase E (206 aa).

5 residues coordinate S-adenosyl-L-methionine: glycine 60, tryptophan 62, aspartate 80, aspartate 96, and aspartate 121. Residue lysine 161 is the Proton acceptor of the active site.

This sequence belongs to the class I-like SAM-binding methyltransferase superfamily. RNA methyltransferase RlmE family.

It is found in the cytoplasm. It catalyses the reaction uridine(2552) in 23S rRNA + S-adenosyl-L-methionine = 2'-O-methyluridine(2552) in 23S rRNA + S-adenosyl-L-homocysteine + H(+). In terms of biological role, specifically methylates the uridine in position 2552 of 23S rRNA at the 2'-O position of the ribose in the fully assembled 50S ribosomal subunit. This Hahella chejuensis (strain KCTC 2396) protein is Ribosomal RNA large subunit methyltransferase E.